Consider the following 1331-residue polypeptide: NPC1-like intracellular cholesterol transporter 1 (1331 aa).

Residues 1-20 (MAAAWLGWLLWALLLSAAQG) form the signal peptide. At 21-282 (ELYTPKHEAG…RPSFYMGRMP (262 aa)) the chain is on the extracellular side. 9 disulfide bridges follow: Cys-32–Cys-90, Cys-38–Cys-56, Cys-77–Cys-125, Cys-91–Cys-129, Cys-113–Cys-254, Cys-116–Cys-172, Cys-189–Cys-197, Cys-243–Cys-259, and Cys-256–Cys-263. N-linked (GlcNAc...) asparagine glycans are attached at residues Asn-53 and Asn-85. Residue Asn-138 is glycosylated (N-linked (GlcNAc...) asparagine). N-linked (GlcNAc...) asparagine glycosylation is present at Asn-244. The helical transmembrane segment at 283–303 (GWLALIIIFTAVFVLLSAVLV) threads the bilayer. At 304–352 (RLRVVSNRNKNKAEGPQEAPKLPHKHKLSPHTILGRFFQNWGTRVASWP) the chain is on the cytoplasmic side. A helical membrane pass occupies residues 353-373 (LTVLALSFIVVIALAAGLTFI). The Extracellular portion of the chain corresponds to 374-632 (ELTTDPVELW…DEINRTTIQD (259 aa)). Asn-416, Asn-431, Asn-464, Asn-479, Asn-497, and Asn-506 each carry an N-linked (GlcNAc...) asparagine glycan. Cysteines 471 and 485 form a disulfide. Cys-525 and Cys-542 are oxidised to a cystine. 2 N-linked (GlcNAc...) asparagine glycosylation sites follow: Asn-606 and Asn-626. Positions 632 to 797 (DLPVFAVSYI…MTAFVALLSL (166 aa)) constitute an SSD domain. The helical transmembrane segment at 633–653 (LPVFAVSYIIVFLYISLALGS) threads the bilayer. Topologically, residues 654–665 (YSRCSRVAVESK) are cytoplasmic. A helical membrane pass occupies residues 666–686 (ATLGLGGVIVVLGAVLAAMGF). Over 687 to 696 (YSYLGVPSSL) the chain is Extracellular. The helical transmembrane segment at 697-717 (VIIQVVPFLVLAVGADNIFIF) threads the bilayer. Topologically, residues 718-742 (VLEYQRLPRMPGEQREAHIGRTLGS) are cytoplasmic. The chain crosses the membrane as a helical span at residues 743 to 763 (VAPSMLLCSLSEAICFFLGAL). Residues 764–776 (TPMPAVRTFALTS) lie on the Extracellular side of the membrane. Residues 777–797 (GLAIILDFLLQMTAFVALLSL) traverse the membrane as a helical segment. At 798-846 (DSKRQEASRPDVLCCFSTRKLPPPKEKEGLLLRFFRKIYAPFLLHRFIR) the chain is on the cytoplasmic side. The chain crosses the membrane as a helical span at residues 847 to 867 (PVVMLLFLTLFGANLYLMCNI). Residues 868–1113 (NVGLDQELAL…QQYLTVLPEG (246 aa)) are Extracellular-facing. N-linked (GlcNAc...) asparagine glycans are attached at residues Asn-909 and Asn-917. 3 disulfide bridges follow: Cys-920-Cys-925, Cys-967-Cys-1025, and Cys-981-Cys-990. Asn-996, Asn-1038, and Asn-1076 each carry an N-linked (GlcNAc...) asparagine glycan. Residues 1114 to 1134 (IFTLALCFVPTFVVCYLLLGL) form a helical membrane-spanning segment. Over 1135–1142 (DMCSGILN) the chain is Cytoplasmic. Residues 1143-1163 (LLSIIMILVDTIGLMAVWGIS) traverse the membrane as a helical segment. Topologically, residues 1164-1165 (YN) are extracellular. The helical transmembrane segment at 1166–1186 (AVSLINLVTAVGMSVEFVSHI) threads the bilayer. The Cytoplasmic segment spans residues 1187–1206 (TRSFAVSTKPTRLERAKDAT). Residues 1207–1227 (VFMGSAVFAGVAMTNFPGILI) traverse the membrane as a helical segment. The Extracellular segment spans residues 1228–1242 (LGFAQAQLIQIFFFR). A helical transmembrane segment spans residues 1243–1263 (LNLLITLLGLLHGLVFLPVVL). At 1264–1331 (SYLGPDVNQA…SSLPKSDQKF (68 aa)) the chain is on the cytoplasmic side.

The protein belongs to the patched family. Interacts with RAB11A, MYO5B and RAB11FIP2. Interaction with RAB11A, MYO5B and RAB11FIP2 is required for proper transport to the plasma membrane upon cholesterol depletion. Interacts with NPC2. Interacts with LIMA1. In terms of processing, highly glycosylated. As to expression, small intestine showed the highest level of expression. Expression in other tissues including gall bladder, liver, testis and stomach is also observed. Along the duodenum-ileum axis, the levels vary in different segments of the intestine with peak expression in the proximal jejunum. Protein expression is confined to the enterocyte. Discrete localization to the epithelial layer bordering the luminal space along the crypt-villus axis. Protein expression in the enterocyte is observed closest to the luminal space. Expression in enterocytes from the proximal (jejunum) but not in the distal (ileum) region.

It is found in the apical cell membrane. It localises to the cell membrane. It catalyses the reaction cholesterol(in) = cholesterol(out). It carries out the reaction sitosterol(out) = sitosterol(in). Its function is as follows. Plays a major role in cholesterol homeostasis. Critical for the uptake of cholesterol across the plasma membrane of the intestinal enterocyte. Involved in plant sterol absorption, it transports sitosterol, although at lower rates than cholesterol. Is the direct molecular target of ezetimibe, a drug that inhibits cholesterol absorption and is approved for the treatment of hypercholesterolemia. May have a function in the transport of multiple lipids and their homeostasis, thereby influencing lipid metabolism regulation. May be involved in caveolin trafficking from the plasma membrane. Acts as a negative regulator of NPC2 and down-regulates its expression and secretion by inhibiting its maturation and accelerating its degradation. This Rattus norvegicus (Rat) protein is NPC1-like intracellular cholesterol transporter 1.